We begin with the raw amino-acid sequence, 241 residues long: Cysteine-rich secretory protein 3 (241 aa).

Positions 1 to 19 (MALMLVLFFLAAVLPPSLL) are cleaved as a signal peptide. The SCP domain maps to 44 to 170 (SKHNQLRRKV…PLRYFYVCRY (127 aa)). N-linked (GlcNAc...) asparagine glycosylation is found at Asn118, Asn132, and Asn175. 5 cysteine pairs are disulfide-bonded: Cys194/Cys201, Cys197/Cys206, Cys210/Cys241, Cys219/Cys235, and Cys226/Cys239. Positions 210–241 (CQYKDMSFWCKRLEYVCKHPGLKKRCLATCQC) constitute a ShKT domain.

The protein belongs to the CRISP family. In terms of assembly, interacts with A1BG. Interacts with KNG1 isoform LMW. In terms of tissue distribution, expressed in submandibular gland.

It localises to the cytoplasmic vesicle. It is found in the secretory vesicle. This protein is supposed to help spermatozoa undergo functional maturation while they move from the testis to the ductus deferens. The protein is Cysteine-rich secretory protein 3 (Crisp3) of Mus musculus (Mouse).